Here is a 143-residue protein sequence, read N- to C-terminus: Transcription antitermination protein NusB (143 aa).

It belongs to the NusB family.

In terms of biological role, involved in transcription antitermination. Required for transcription of ribosomal RNA (rRNA) genes. Binds specifically to the boxA antiterminator sequence of the ribosomal RNA (rrn) operons. The protein is Transcription antitermination protein NusB of Streptomyces griseus subsp. griseus (strain JCM 4626 / CBS 651.72 / NBRC 13350 / KCC S-0626 / ISP 5235).